The following is a 305-amino-acid chain: Mitochondrial brown fat uncoupling protein 1 (305 aa).

Residues 1-10 (MVGHAATDVP) are Mitochondrial intermembrane-facing. The chain crosses the membrane as a helical span at residues 11–32 (PTMAVKIFSAGVAACVADIITF). Solcar repeat units lie at residues 11–102 (PTMA…VQEF), 109–199 (ASLG…MKEA), and 208–293 (DDVP…LKRE). Residues 33-73 (PLDTAKVRLQIQGECLTSSAFRYKGVLGTIITLAKTEGPVK) lie on the Mitochondrial matrix side of the membrane. Lys-56 is a fatty acid 16:0 binding site. A helical membrane pass occupies residues 74 to 96 (LYSGLPAGLQRQISFASLRIGLY). The Mitochondrial intermembrane segment spans residues 97–114 (DTVQEFFTTGKEASLGSK). The helical transmembrane segment at 115–131 (ISAGLTTGGVAVFIGQP) threads the bilayer. Over 132–176 (TEVVKVRLQAQSHLHGPKPRYTGTYNAYRIIATTEGLTGLWKGTT) the chain is Mitochondrial matrix. A helical transmembrane segment spans residues 177-193 (PNLTRNVIINCTELVTY). Over 194-210 (DLMKEALVKNKLLADDV) the chain is Mitochondrial intermembrane. Residues 211 to 230 (PCHFVSAVVAGFCTTVLSSP) traverse the membrane as a helical segment. The Mitochondrial matrix portion of the chain corresponds to 231–264 (VDVVKTRFVNSSPGQYTSVPNCAMMMLTREGPSA). Cysteine sulfenic acid (-SOH) is present on Cys-252. The helical transmembrane segment at 265-287 (FFKGFVPSFLRLGSWNIIMFVCF) threads the bilayer. Lys-267 contacts fatty acid 16:0. Over 288–305 (EQLKRELMKSRQAMDCAT) the chain is Mitochondrial intermembrane.

The protein belongs to the mitochondrial carrier (TC 2.A.29) family. In terms of assembly, most probably functions as a monomer. Binds one purine nucleotide per monomer. However, has also been suggested to function as a homodimer or a homotetramer. Tightly associates with cardiolipin in the mitochondrion inner membrane; may stabilize and regulate its activity. In terms of processing, may undergo sulfenylation upon cold exposure. May increase the sensitivity of UCP1 thermogenic function to the activation by noradrenaline probably through structural effects. May undergo ubiquitin-mediated proteasomal degradation.

It is found in the mitochondrion inner membrane. It catalyses the reaction H(+)(in) = H(+)(out). Its activity is regulated as follows. Has no constitutive proton transporter activity and has to be activated by long-chain fatty acids/LCFAs. Inhibited by purine nucleotides. Both purine nucleotides and LCFAs bind the cytosolic side of the transporter and directly compete to activate or inhibit it. Activated by noradrenaline and reactive oxygen species. Despite lacking canonical translational encoding for selenocysteine, a small pool of the protein has been observed to selectively incorporate selenocysteine at 'Cys-252'. Selenocysteine-modified protein is highly sensitive to redox modification and may constitute a pool of protein highly sensitive to activation by elevated levels of reactive oxygen species (ROS). Its function is as follows. Mitochondrial protein responsible for thermogenic respiration, a specialized capacity of brown adipose tissue and beige fat that participates in non-shivering adaptive thermogenesis to temperature and diet variations and more generally to the regulation of energy balance. Functions as a long-chain fatty acid/LCFA and proton symporter, simultaneously transporting one LCFA and one proton through the inner mitochondrial membrane. However, LCFAs remaining associated with the transporter via their hydrophobic tails, it results in an apparent transport of protons activated by LCFAs. Thereby, dissipates the mitochondrial proton gradient and converts the energy of substrate oxydation into heat instead of ATP. Regulates the production of reactive oxygen species/ROS by mitochondria. This chain is Mitochondrial brown fat uncoupling protein 1, found in Ovis aries (Sheep).